Here is a 142-residue protein sequence, read N- to C-terminus: Large ribosomal subunit protein uL11 (142 aa).

It belongs to the universal ribosomal protein uL11 family. Part of the ribosomal stalk of the 50S ribosomal subunit. Interacts with L10 and the large rRNA to form the base of the stalk. L10 forms an elongated spine to which L12 dimers bind in a sequential fashion forming a multimeric L10(L12)X complex. One or more lysine residues are methylated.

In terms of biological role, forms part of the ribosomal stalk which helps the ribosome interact with GTP-bound translation factors. The sequence is that of Large ribosomal subunit protein uL11 from Xanthomonas campestris pv. campestris (strain B100).